Consider the following 448-residue polypeptide: C4-dicarboxylate transport protein (448 aa).

A run of 9 helical transmembrane segments spans residues 9–29 (SLYF…HFYP), 59–79 (LIKM…IAGM), 91–111 (VALL…LLVI), 159–179 (AFAN…GFAL), 203–223 (IVNM…AFTI), 237–257 (LIIC…GTIS), 312–332 (GYSF…IFIA), 345–365 (ITLL…TGSG), and 367–387 (IVMA…LALI).

The protein belongs to the dicarboxylate/amino acid:cation symporter (DAACS) (TC 2.A.23) family.

The protein localises to the cell inner membrane. Responsible for the transport of dicarboxylates such as succinate, fumarate, and malate from the periplasm across the membrane. This chain is C4-dicarboxylate transport protein, found in Acinetobacter baylyi (strain ATCC 33305 / BD413 / ADP1).